We begin with the raw amino-acid sequence, 644 residues long: Coiled-coil domain-containing protein 22 homolog (644 aa).

The segment at 316–341 is disordered; the sequence is DEQKAAAMAGLSESGPPKMDTEEELQ. Coiled-coil stretches lie at residues 333 to 383, 409 to 486, and 592 to 644; these read KMDT…NEQV, DAEN…GKDD, and GVIM…LKSS.

Belongs to the CCDC22 family.

The chain is Coiled-coil domain-containing protein 22 homolog from Nematostella vectensis (Starlet sea anemone).